The following is a 176-amino-acid chain: Isopentenyl-diphosphate Delta-isomerase (176 aa).

The Mn(2+) site is built by His-22 and His-28. Residues 26–160 enclose the Nudix hydrolase domain; it reads LRHKAVSVFV…PERYTPWLRI (135 aa). The active site involves Cys-62. His-64 lines the Mn(2+) pocket. Glu-82 contacts Mg(2+). 2 residues coordinate Mn(2+): Glu-108 and Glu-110. Glu-110 is a catalytic residue.

The protein belongs to the IPP isomerase type 1 family. Mg(2+) is required as a cofactor. Requires Mn(2+) as cofactor.

It localises to the cytoplasm. The catalysed reaction is isopentenyl diphosphate = dimethylallyl diphosphate. It participates in isoprenoid biosynthesis; dimethylallyl diphosphate biosynthesis; dimethylallyl diphosphate from isopentenyl diphosphate: step 1/1. It functions in the pathway porphyrin-containing compound metabolism; chlorophyll biosynthesis. Its function is as follows. Catalyzes the 1,3-allylic rearrangement of the homoallylic substrate isopentenyl (IPP) to its highly electrophilic allylic isomer, dimethylallyl diphosphate (DMAPP). The protein is Isopentenyl-diphosphate Delta-isomerase of Dinoroseobacter shibae (strain DSM 16493 / NCIMB 14021 / DFL 12).